The primary structure comprises 134 residues: Transcription antitermination protein NusB (134 aa).

The protein belongs to the NusB family.

Its function is as follows. Involved in transcription antitermination. Required for transcription of ribosomal RNA (rRNA) genes. Binds specifically to the boxA antiterminator sequence of the ribosomal RNA (rrn) operons. The sequence is that of Transcription antitermination protein NusB from Shewanella amazonensis (strain ATCC BAA-1098 / SB2B).